A 210-amino-acid chain; its full sequence is Cytochrome c biogenesis ATP-binding export protein CcmA (210 aa).

One can recognise an ABC transporter domain in the interval 3-205; the sequence is LHLQAAGLAC…KPSGYRELNL (203 aa). 37 to 44 provides a ligand contact to ATP; the sequence is GPNGSGKT.

This sequence belongs to the ABC transporter superfamily. CcmA exporter (TC 3.A.1.107) family. As to quaternary structure, the complex is composed of two ATP-binding proteins (CcmA) and two transmembrane proteins (CcmB).

Its subcellular location is the cell inner membrane. It carries out the reaction heme b(in) + ATP + H2O = heme b(out) + ADP + phosphate + H(+). Functionally, part of the ABC transporter complex CcmAB involved in the biogenesis of c-type cytochromes; once thought to export heme, this seems not to be the case, but its exact role is uncertain. Responsible for energy coupling to the transport system. This chain is Cytochrome c biogenesis ATP-binding export protein CcmA, found in Pseudomonas putida (strain ATCC 47054 / DSM 6125 / CFBP 8728 / NCIMB 11950 / KT2440).